The following is a 347-amino-acid chain: Protein RecA (347 aa).

67–74 (GPESSGKT) provides a ligand contact to ATP.

It belongs to the RecA family.

Its subcellular location is the cytoplasm. Functionally, can catalyze the hydrolysis of ATP in the presence of single-stranded DNA, the ATP-dependent uptake of single-stranded DNA by duplex DNA, and the ATP-dependent hybridization of homologous single-stranded DNAs. It interacts with LexA causing its activation and leading to its autocatalytic cleavage. The chain is Protein RecA from Helicobacter pylori (strain G27).